The chain runs to 185 residues: Ribosome-recycling factor (185 aa).

It belongs to the RRF family.

The protein resides in the cytoplasm. Its function is as follows. Responsible for the release of ribosomes from messenger RNA at the termination of protein biosynthesis. May increase the efficiency of translation by recycling ribosomes from one round of translation to another. This is Ribosome-recycling factor from Clostridium acetobutylicum (strain ATCC 824 / DSM 792 / JCM 1419 / IAM 19013 / LMG 5710 / NBRC 13948 / NRRL B-527 / VKM B-1787 / 2291 / W).